We begin with the raw amino-acid sequence, 650 residues long: Acetyl-coenzyme A synthetase (650 aa).

CoA-binding positions include 191–194, threonine 311, and asparagine 335; that span reads RGGR. Residues 387–389, 411–416, aspartate 501, and arginine 516 contribute to the ATP site; these read GEP and DTWWQT. Serine 524 is a CoA binding site. Arginine 527 is a binding site for ATP. The Mg(2+) site is built by valine 538, histidine 540, and isoleucine 543. Arginine 585 contacts CoA. Residue lysine 610 is modified to N6-acetyllysine.

It belongs to the ATP-dependent AMP-binding enzyme family. Mg(2+) serves as cofactor. Acetylated. Deacetylation by the SIR2-homolog deacetylase activates the enzyme.

The catalysed reaction is acetate + ATP + CoA = acetyl-CoA + AMP + diphosphate. Catalyzes the conversion of acetate into acetyl-CoA (AcCoA), an essential intermediate at the junction of anabolic and catabolic pathways. AcsA undergoes a two-step reaction. In the first half reaction, AcsA combines acetate with ATP to form acetyl-adenylate (AcAMP) intermediate. In the second half reaction, it can then transfer the acetyl group from AcAMP to the sulfhydryl group of CoA, forming the product AcCoA. The chain is Acetyl-coenzyme A synthetase from Vibrio parahaemolyticus serotype O3:K6 (strain RIMD 2210633).